The primary structure comprises 655 residues: Import motor subunit, mitochondrial (655 aa).

Residues 1–23 (MLAAKNILNRSSLSSSFRIATRL) constitute a mitochondrion transit peptide. At Thr330 the chain carries Phosphothreonine. The interval 629–655 (EQLYKNDSNNNNNNNNGNNAESDETKQ) is disordered. Over residues 637–647 (NNNNNNNNGNN) the composition is skewed to low complexity.

Belongs to the heat shock protein 70 family. In terms of assembly, component of the PAM complex, at least composed of SSC1 (mtHsp70), MGE1, TIM44, PAM16/TIM16, PAM17 and PAM18/TIM14. In the complex, SSC1 interacts directly with PAM18 and TIM44. Interacts with NAP1. Component of endonuclease SceI (endo.SceI), which is a heterodimer of ENS2 and SSC1.

It is found in the mitochondrion matrix. The catalysed reaction is ATP + H2O = ADP + phosphate + H(+). Essential component of the PAM complex, a complex required for the translocation of transit peptide-containing proteins from the inner membrane into the mitochondrial matrix in an ATP-dependent manner. Constitutes the ATP-driven core of the motor and binds the precursor preprotein. Required for the import of the processed frataxin homolog YFH1 into the mitochondrion. Its function is as follows. Acts as a non-catalytic component of endonuclease SceI (endo.SceI), which cleaves specifically at multiple sites on mitochondrial DNA and produces double-stranded breaks. SSC1 confers broader sequence specificity, greater stability, and higher activity on the catalytic subunit. The polypeptide is Import motor subunit, mitochondrial (Saccharomyces cerevisiae (Baker's yeast)).